A 510-amino-acid chain; its full sequence is Histidine ammonia-lyase (510 aa).

The 5-imidazolinone (Ala-Gly) cross-link spans 143–145 (ASG). Position 144 is a 2,3-didehydroalanine (Ser) (serine 144).

The protein belongs to the PAL/histidase family. Post-translationally, contains an active site 4-methylidene-imidazol-5-one (MIO), which is formed autocatalytically by cyclization and dehydration of residues Ala-Ser-Gly.

It is found in the cytoplasm. The enzyme catalyses L-histidine = trans-urocanate + NH4(+). It participates in amino-acid degradation; L-histidine degradation into L-glutamate; N-formimidoyl-L-glutamate from L-histidine: step 1/3. In Aliivibrio fischeri (strain ATCC 700601 / ES114) (Vibrio fischeri), this protein is Histidine ammonia-lyase.